A 349-amino-acid chain; its full sequence is Thiamine thiazole synthase, chloroplastic (349 aa).

Residues 1 to 45 (MAAIASTLSLSSTKPQRLFDSSFHGSAISAAPISIGLKPRSFSVR) constitute a chloroplast transit peptide. Substrate-binding positions include Ala94, 114–115 (EQ), Gly122, and Ala187. A 2,3-didehydroalanine (Cys) modification is found at Cys216. Residues Asp218, His233, Met285, and 295-297 (RMG) contribute to the substrate site.

The protein belongs to the THI4 family. As to quaternary structure, homooctamer. Interacts with RBCX1 and RBCX1. Interacts with CPK33. Fe cation is required as a cofactor. In terms of processing, during the catalytic reaction, a sulfide is transferred from Cys-216 to a reaction intermediate, generating a dehydroalanine residue. Not phosphorylated in vitro by CPK33. Expressed at high levels in chloroplast-containing parenchymatic cells of leaves, inflorescence shoots and flowers, and at lower levels in the vascular system. In young plants, detected in roots and shoots including cotyledons, leaves and hypocotyls. Also observed in apical meristematic regions, siliques and embryos. Low expression in roots, limited to the vascular tissue. Broadly expressed in roots, cotyledons, leaves, hypocotyls, inflorescences, siliques, and strongly in guard cells.

The protein resides in the plastid. Its subcellular location is the chloroplast. It localises to the mitochondrion. The protein localises to the cell membrane. It catalyses the reaction [ADP-thiazole synthase]-L-cysteine + glycine + NAD(+) = [ADP-thiazole synthase]-dehydroalanine + ADP-5-ethyl-4-methylthiazole-2-carboxylate + nicotinamide + 3 H2O + 2 H(+). In terms of biological role, involved in biosynthesis of the thiamine precursor thiazole. Catalyzes the conversion of NAD and glycine to adenosine diphosphate 5-(2-hydroxyethyl)-4-methylthiazole-2-carboxylic acid (ADT), an adenylated thiazole intermediate. The reaction includes an iron-dependent sulfide transfer from a conserved cysteine residue of the protein to a thiazole intermediate. The enzyme can only undergo a single turnover, which suggests it is a suicide enzyme. May have additional roles in adaptation to various stress conditions and in DNA damage tolerance. Acts as a positive regulator for the abscisic acid-induced activation of slow type anion channels during stomatal closure by repressing CPK33 kinase activity. The polypeptide is Thiamine thiazole synthase, chloroplastic (Arabidopsis thaliana (Mouse-ear cress)).